Reading from the N-terminus, the 439-residue chain is Xylose isomerase (439 aa).

Residues histidine 101 and aspartate 104 contribute to the active site. Residues glutamate 232, glutamate 268, histidine 271, aspartate 296, aspartate 307, aspartate 309, and aspartate 339 each contribute to the Mg(2+) site.

Belongs to the xylose isomerase family. As to quaternary structure, homotetramer. Requires Mg(2+) as cofactor.

The protein localises to the cytoplasm. It carries out the reaction alpha-D-xylose = alpha-D-xylulofuranose. The polypeptide is Xylose isomerase (Haemophilus influenzae (strain PittGG)).